Here is a 329-residue protein sequence, read N- to C-terminus: tRNA N6-adenosine threonylcarbamoyltransferase (329 aa).

Fe cation contacts are provided by His-107 and His-111. Substrate is bound by residues 129-133 (LVSGG), Asp-162, Gly-175, and Asn-268. Asp-296 serves as a coordination point for Fe cation.

It belongs to the KAE1 / TsaD family. It depends on Fe(2+) as a cofactor.

Its subcellular location is the cytoplasm. It catalyses the reaction L-threonylcarbamoyladenylate + adenosine(37) in tRNA = N(6)-L-threonylcarbamoyladenosine(37) in tRNA + AMP + H(+). Its function is as follows. Required for the formation of a threonylcarbamoyl group on adenosine at position 37 (t(6)A37) in tRNAs that read codons beginning with adenine. Is involved in the transfer of the threonylcarbamoyl moiety of threonylcarbamoyl-AMP (TC-AMP) to the N6 group of A37, together with TsaE and TsaB. TsaD likely plays a direct catalytic role in this reaction. The polypeptide is tRNA N6-adenosine threonylcarbamoyltransferase (Nitratiruptor sp. (strain SB155-2)).